The sequence spans 478 residues: MARKTLRARRFFSLIFPFFFITSVYAEQTPVSAKTVTVEAKNETFAPQHPDQYQSWKATSEQSAREDALAEDPRLVILWAGYPFSRDYNKPRGHAYAVTDVRETLRTGAPKTAEDGPLPMACWSCKSPDVARLIQQEGEDGYFHGKWARGGPEIVNDLGCADCHNTASDDFAQGKPALTLSRPYAERAMEAIGKPFEKAGRFDQQSMVCGQCHVEYYFDGKNKAVKFPWDEGMKVENMEQYYDAIAFSDWTNSLSRTPMLKAQHPEYETWSAGIHGKNNVTCIDCHMPKVQNAEGKLYTDHKIGNPFDNFAQTCANCHTQDKASLQKVVAERKQAIHDLKIKVEDQLVHAHFEAKAAWDAGATDAEMKPILNDIRHAQWRWDLAIASHGIHMHAPEEGLRMLGSAMDKAADARTKLARLLATKGITHEIPLPDISTKEKAQKAIGLNMQQINAEKQDFLKTVVPQWEDQARKNGLLSQ.

The first 26 residues, 1–26, serve as a signal peptide directing secretion; that stretch reads MARKTLRARRFFSLIFPFFFITSVYA. His94 provides a ligand contact to heme c. Cys122, Cys125, and Lys126 together coordinate heme. The heme c site is built by Cys160, Cys163, His164, Cys209, Cys212, and His213. Positions 215, 216, 261, and 263 each coordinate Ca(2+). Tyr216 serves as a coordination point for substrate. Residue His264 participates in substrate binding. Residues His275, Cys282, Cys285, His286, His301, Cys314, Cys317, His318, and His393 each contribute to the heme c site.

It belongs to the cytochrome c-552 family. The cofactor is Ca(2+). Heme c serves as cofactor.

Its subcellular location is the periplasm. The enzyme catalyses 6 Fe(III)-[cytochrome c] + NH4(+) + 2 H2O = 6 Fe(II)-[cytochrome c] + nitrite + 8 H(+). It participates in nitrogen metabolism; nitrate reduction (assimilation). Its function is as follows. Catalyzes the reduction of nitrite to ammonia, consuming six electrons in the process. In Salmonella paratyphi C (strain RKS4594), this protein is Cytochrome c-552.